A 70-amino-acid chain; its full sequence is Large ribosomal subunit protein eL38 (70 aa).

This sequence belongs to the eukaryotic ribosomal protein eL38 family.

In Artemia franciscana (Brine shrimp), this protein is Large ribosomal subunit protein eL38 (RPL38).